A 256-amino-acid chain; its full sequence is Thiazole synthase (256 aa).

Lysine 97 serves as the catalytic Schiff-base intermediate with DXP. 1-deoxy-D-xylulose 5-phosphate contacts are provided by residues glycine 158, alanine 184–glycine 185, and asparagine 206–threonine 207.

It belongs to the ThiG family. In terms of assembly, homotetramer. Forms heterodimers with either ThiH or ThiS.

The protein localises to the cytoplasm. It carries out the reaction [ThiS sulfur-carrier protein]-C-terminal-Gly-aminoethanethioate + 2-iminoacetate + 1-deoxy-D-xylulose 5-phosphate = [ThiS sulfur-carrier protein]-C-terminal Gly-Gly + 2-[(2R,5Z)-2-carboxy-4-methylthiazol-5(2H)-ylidene]ethyl phosphate + 2 H2O + H(+). The protein operates within cofactor biosynthesis; thiamine diphosphate biosynthesis. Its function is as follows. Catalyzes the rearrangement of 1-deoxy-D-xylulose 5-phosphate (DXP) to produce the thiazole phosphate moiety of thiamine. Sulfur is provided by the thiocarboxylate moiety of the carrier protein ThiS. In vitro, sulfur can be provided by H(2)S. The polypeptide is Thiazole synthase (Pelotomaculum thermopropionicum (strain DSM 13744 / JCM 10971 / SI)).